The following is an 879-amino-acid chain: Alanine--tRNA ligase (879 aa).

Residues His-566, His-570, Cys-668, and His-672 each coordinate Zn(2+).

This sequence belongs to the class-II aminoacyl-tRNA synthetase family. It depends on Zn(2+) as a cofactor.

The protein localises to the cytoplasm. It carries out the reaction tRNA(Ala) + L-alanine + ATP = L-alanyl-tRNA(Ala) + AMP + diphosphate. In terms of biological role, catalyzes the attachment of alanine to tRNA(Ala) in a two-step reaction: alanine is first activated by ATP to form Ala-AMP and then transferred to the acceptor end of tRNA(Ala). Also edits incorrectly charged Ser-tRNA(Ala) and Gly-tRNA(Ala) via its editing domain. The chain is Alanine--tRNA ligase from Clostridium perfringens (strain ATCC 13124 / DSM 756 / JCM 1290 / NCIMB 6125 / NCTC 8237 / Type A).